We begin with the raw amino-acid sequence, 122 residues long: Small ribosomal subunit protein uS13 (122 aa).

The interval 97–122 (PVRGQRTHTNARTRKGPAKAIAGKKK) is disordered.

Belongs to the universal ribosomal protein uS13 family. Part of the 30S ribosomal subunit. Forms a loose heterodimer with protein S19. Forms two bridges to the 50S subunit in the 70S ribosome.

Functionally, located at the top of the head of the 30S subunit, it contacts several helices of the 16S rRNA. In the 70S ribosome it contacts the 23S rRNA (bridge B1a) and protein L5 of the 50S subunit (bridge B1b), connecting the 2 subunits; these bridges are implicated in subunit movement. Contacts the tRNAs in the A and P-sites. This Rhizobium rhizogenes (strain K84 / ATCC BAA-868) (Agrobacterium radiobacter) protein is Small ribosomal subunit protein uS13.